We begin with the raw amino-acid sequence, 722 residues long: Polymerase basic protein 2 (722 aa).

The RNA polymerase is composed of three subunits: PB1, PB2 and PA.

The protein localises to the virion. Its subcellular location is the host nucleus. Involved in transcription initiation and cap-stealing mechanism, in which cellular capped pre-mRNA are used to generate primers for viral transcription. Binds the cap of the target pre-RNA which is subsequently cleaved by PB1. May play a role in genome replication. This is Polymerase basic protein 2 from Gadus morhua (Atlantic cod).